We begin with the raw amino-acid sequence, 248 residues long: Ribosomal RNA small subunit methyltransferase J (248 aa).

S-adenosyl-L-methionine contacts are provided by residues 98–99 (RD), 114–115 (ER), 150–151 (SS), and D168.

The protein belongs to the methyltransferase superfamily. RsmJ family.

It localises to the cytoplasm. The enzyme catalyses guanosine(1516) in 16S rRNA + S-adenosyl-L-methionine = N(2)-methylguanosine(1516) in 16S rRNA + S-adenosyl-L-homocysteine + H(+). Its function is as follows. Specifically methylates the guanosine in position 1516 of 16S rRNA. In Shewanella amazonensis (strain ATCC BAA-1098 / SB2B), this protein is Ribosomal RNA small subunit methyltransferase J.